The sequence spans 468 residues: ATP synthase subunit beta (468 aa).

155–162 provides a ligand contact to ATP; that stretch reads GGAGVGKT.

Belongs to the ATPase alpha/beta chains family. In terms of assembly, F-type ATPases have 2 components, CF(1) - the catalytic core - and CF(0) - the membrane proton channel. CF(1) has five subunits: alpha(3), beta(3), gamma(1), delta(1), epsilon(1). CF(0) has three main subunits: a(1), b(2) and c(9-12). The alpha and beta chains form an alternating ring which encloses part of the gamma chain. CF(1) is attached to CF(0) by a central stalk formed by the gamma and epsilon chains, while a peripheral stalk is formed by the delta and b chains.

The protein resides in the cell membrane. The enzyme catalyses ATP + H2O + 4 H(+)(in) = ADP + phosphate + 5 H(+)(out). Functionally, produces ATP from ADP in the presence of a proton gradient across the membrane. The catalytic sites are hosted primarily by the beta subunits. The protein is ATP synthase subunit beta of Streptococcus pneumoniae (strain CGSP14).